The primary structure comprises 325 residues: MKPTVISADALFDAHRAALKWEWIAGHAHPERRFDEVAVRDAQSAADLVGYLNYIHPYRVQIVGRREVRYLQPGDASGDNPVELQEKRISRIVTLEPPVLVVADGCTPPDRLVAMCERADIPLFCTEDSAGHVIDVLRGYLSQHFAERTSRHGVFMDILGLGVLLTGESGLGKSELGLELISRGHGLVADDVVDLFRVSQAAIEGRCPELLRNLLEVRGIGLLDIRAIFGETAVRRKMRLKLIVHLVRKETLDRDFERLPYEPLFEDILGMPVRKVVIAVDAGRNLAVLVEAAVRNTVLQLRGIDTYRDFIQRHRDLMDSGDSGL.

Active-site residues include His152 and Lys173. ATP is bound at residue 167-174; it reads GESGLGKS. Ser174 contacts Mg(2+). The active-site Proton acceptor; for phosphorylation activity. Proton donor; for dephosphorylation activity is the Asp191. Positions 215–224 are important for the catalytic mechanism of both phosphorylation and dephosphorylation; it reads LEVRGIGLLD. Glu216 is a Mg(2+) binding site. Arg258 is a catalytic residue. The tract at residues 279-284 is important for the catalytic mechanism of dephosphorylation; that stretch reads AVDAGR.

Belongs to the HPrK/P family. Homohexamer. The cofactor is Mg(2+).

The catalysed reaction is [HPr protein]-L-serine + ATP = [HPr protein]-O-phospho-L-serine + ADP + H(+). The enzyme catalyses [HPr protein]-O-phospho-L-serine + phosphate + H(+) = [HPr protein]-L-serine + diphosphate. In terms of biological role, catalyzes the ATP- as well as the pyrophosphate-dependent phosphorylation of a specific serine residue in HPr, a phosphocarrier protein of the phosphoenolpyruvate-dependent sugar phosphotransferase system (PTS). HprK/P also catalyzes the pyrophosphate-producing, inorganic phosphate-dependent dephosphorylation (phosphorolysis) of seryl-phosphorylated HPr (P-Ser-HPr). This chain is HPr kinase/phosphorylase, found in Leptothrix cholodnii (strain ATCC 51168 / LMG 8142 / SP-6) (Leptothrix discophora (strain SP-6)).